The primary structure comprises 1014 residues: UvrABC system protein A (1014 aa).

32–39 is a binding site for ATP; it reads GLSGSGKS. ABC transporter domains lie at 314–592 and 612–941; these read WSHG…AESQ and QDPS…KFLR. An ATP-binding site is contributed by 645 to 652; sequence GVSGSGKS. The segment at 744 to 770 adopts a C4-type zinc-finger fold; sequence CENCAGDGTIKIEMNFLPDVYVPCEVC. The segment covering 976–995 has biased composition (low complexity); it reads TKTVTGTAAKKATATRTAKT. Residues 976–1014 are disordered; it reads TKTVTGTAAKKATATRTAKTAVKKAAKPAAKKTTRTSKA. Basic residues predominate over residues 996 to 1014; that stretch reads AVKKAAKPAAKKTTRTSKA.

The protein belongs to the ABC transporter superfamily. UvrA family. Forms a heterotetramer with UvrB during the search for lesions.

The protein resides in the cytoplasm. Its function is as follows. The UvrABC repair system catalyzes the recognition and processing of DNA lesions. UvrA is an ATPase and a DNA-binding protein. A damage recognition complex composed of 2 UvrA and 2 UvrB subunits scans DNA for abnormalities. When the presence of a lesion has been verified by UvrB, the UvrA molecules dissociate. This is UvrABC system protein A from Streptomyces coelicolor (strain ATCC BAA-471 / A3(2) / M145).